Consider the following 226-residue polypeptide: Elongation factor 1-delta 2 (226 aa).

The interval T82–K131 is disordered. The segment covering A97–E113 has biased composition (acidic residues). Over residues E114 to A124 the composition is skewed to basic and acidic residues.

This sequence belongs to the EF-1-beta/EF-1-delta family. As to quaternary structure, EF-1 is composed of 4 subunits: alpha, beta (1B-alpha=beta'), delta (1B-beta), and gamma (1B-gamma).

EF-1-beta and EF-1-beta' stimulate the exchange of GDP bound to EF-1-alpha to GTP. This chain is Elongation factor 1-delta 2, found in Oryza sativa subsp. japonica (Rice).